The primary structure comprises 177 residues: Large ribosomal subunit protein uL6 (177 aa).

Belongs to the universal ribosomal protein uL6 family. In terms of assembly, part of the 50S ribosomal subunit.

In terms of biological role, this protein binds to the 23S rRNA, and is important in its secondary structure. It is located near the subunit interface in the base of the L7/L12 stalk, and near the tRNA binding site of the peptidyltransferase center. The sequence is that of Large ribosomal subunit protein uL6 from Nitrosospira multiformis (strain ATCC 25196 / NCIMB 11849 / C 71).